A 111-amino-acid polypeptide reads, in one-letter code: Large ribosomal subunit protein eL33x (111 aa).

The protein belongs to the eukaryotic ribosomal protein eL33 family.

The protein is Large ribosomal subunit protein eL33x (RPL35AD) of Arabidopsis thaliana (Mouse-ear cress).